Here is a 526-residue protein sequence, read N- to C-terminus: Radial spoke head protein 6 homolog A (526 aa).

Disordered stretches follow at residues 180–231 (EGED…EENG), 371–411 (VKSE…DAEI), and 469–526 (PPAP…EEDD). Acidic residues-rich tracts occupy residues 181-212 (GEDDEAEEGGEEEEKGEVEDDVEEEENEEAED) and 374-395 (EEEEDEEEAEEEEKEEENEPEP). Residues 497–506 (QALKAAKEEA) show a composition bias toward basic and acidic residues. Acidic residues predominate over residues 507-526 (EAAAEEMEEEEDEEEEEEDD).

This sequence belongs to the flagellar radial spoke RSP4/6 family. Component of sperm axonemal radial spoke complexes.

The protein localises to the cytoplasm. The protein resides in the cytoskeleton. It localises to the flagellum axoneme. In terms of biological role, functions as part of radial spoke complexes in the axoneme of sperm flagella that play an important part in motility. The triple radial spokes (RS1, RS2 and RS3) are required to modulate beating of the sperm flagellum. This chain is Radial spoke head protein 6 homolog A (rsph6a), found in Xenopus tropicalis (Western clawed frog).